The chain runs to 427 residues: Gamma-glutamyl phosphate reductase (427 aa).

Belongs to the gamma-glutamyl phosphate reductase family.

Its subcellular location is the cytoplasm. The enzyme catalyses L-glutamate 5-semialdehyde + phosphate + NADP(+) = L-glutamyl 5-phosphate + NADPH + H(+). The protein operates within amino-acid biosynthesis; L-proline biosynthesis; L-glutamate 5-semialdehyde from L-glutamate: step 2/2. Catalyzes the NADPH-dependent reduction of L-glutamate 5-phosphate into L-glutamate 5-semialdehyde and phosphate. The product spontaneously undergoes cyclization to form 1-pyrroline-5-carboxylate. The sequence is that of Gamma-glutamyl phosphate reductase from Rhizobium etli (strain CIAT 652).